Consider the following 45-residue polypeptide: Toxin Bcs III 15.09 (45 aa).

The EGF-like domain maps to 2–44 (QGTACTGEHAHNFCLNGGTCRHIQSLGEYYCICPEGYTGHRCE). Intrachain disulfides connect cysteine 6–cysteine 21, cysteine 15–cysteine 32, and cysteine 34–cysteine 43.

Its subcellular location is the secreted. The protein localises to the nematocyst. Functionally, has both toxic and EGF activity. This chain is Toxin Bcs III 15.09, found in Bunodosoma caissarum (Sea anemone).